A 144-amino-acid chain; its full sequence is Large ribosomal subunit protein eL27 (144 aa).

The KOW domain maps to 6 to 43; the sequence is IKPGRLVILLNGKYAGRKAVVIKTFDDATASKSRPYGH.

It belongs to the eukaryotic ribosomal protein eL27 family.

The chain is Large ribosomal subunit protein eL27 (rpl27) from Dictyostelium discoideum (Social amoeba).